A 115-amino-acid polypeptide reads, in one-letter code: Large ribosomal subunit protein eL30 (115 aa).

The protein belongs to the eukaryotic ribosomal protein eL30 family. As to quaternary structure, component of the large ribosomal subunit.

The protein resides in the cytoplasm. Functionally, component of the large ribosomal subunit. The ribosome is a large ribonucleoprotein complex responsible for the synthesis of proteins in the cell. This is Large ribosomal subunit protein eL30 (RPL30) from Gallus gallus (Chicken).